The primary structure comprises 216 residues: Adenylate kinase (216 aa).

Residue 10–15 (GAGKGT) participates in ATP binding. The NMP stretch occupies residues 30-59 (STGDMFRAAMKAETEMGLQAKSFIDKGALV). Residues threonine 31, arginine 36, 57 to 59 (ALV), 85 to 88 (GFPR), and glutamine 92 each bind AMP. An LID region spans residues 126-163 (GRRICKECGATYHLEFNPPAKADVCDKCGGELYQRSDD). Arginine 127 is an ATP binding site. 2 residues coordinate Zn(2+): cysteine 130 and cysteine 133. 136 to 137 (TY) serves as a coordination point for ATP. Zn(2+)-binding residues include cysteine 150 and cysteine 153. Arginine 160 and arginine 171 together coordinate AMP. Glutamine 199 contributes to the ATP binding site.

Belongs to the adenylate kinase family. As to quaternary structure, monomer.

Its subcellular location is the cytoplasm. It carries out the reaction AMP + ATP = 2 ADP. It functions in the pathway purine metabolism; AMP biosynthesis via salvage pathway; AMP from ADP: step 1/1. Functionally, catalyzes the reversible transfer of the terminal phosphate group between ATP and AMP. Plays an important role in cellular energy homeostasis and in adenine nucleotide metabolism. This Bacillus cereus (strain ATCC 10987 / NRS 248) protein is Adenylate kinase.